A 422-amino-acid chain; its full sequence is Tryptophan synthase beta chain (422 aa).

Lysine 111 is subject to N6-(pyridoxal phosphate)lysine.

It belongs to the TrpB family. Tetramer of two alpha and two beta chains. Pyridoxal 5'-phosphate serves as cofactor.

The catalysed reaction is (1S,2R)-1-C-(indol-3-yl)glycerol 3-phosphate + L-serine = D-glyceraldehyde 3-phosphate + L-tryptophan + H2O. It participates in amino-acid biosynthesis; L-tryptophan biosynthesis; L-tryptophan from chorismate: step 5/5. Functionally, the beta subunit is responsible for the synthesis of L-tryptophan from indole and L-serine. The polypeptide is Tryptophan synthase beta chain (Pseudothermotoga lettingae (strain ATCC BAA-301 / DSM 14385 / NBRC 107922 / TMO) (Thermotoga lettingae)).